A 452-amino-acid polypeptide reads, in one-letter code: Bifunctional protein GlmU (452 aa).

The pyrophosphorylase stretch occupies residues 1–226; it reads MSLHIIILAA…LHEVEGVNNR (226 aa). Residues 8–11, Lys22, Gln73, 78–79, 100–102, Gly136, Glu151, Asn166, and Asn224 contribute to the UDP-N-acetyl-alpha-D-glucosamine site; these read LAAG, GT, and YGD. Asp102 contributes to the Mg(2+) binding site. Mg(2+) is bound at residue Asn224. A linker region spans residues 227–247; the sequence is IQLAALERAYQQQVAEELMLA. The tract at residues 248-452 is N-acetyltransferase; sequence GATLRDPARV…IDGWTRPVKK (205 aa). Positions 330 and 348 each coordinate UDP-N-acetyl-alpha-D-glucosamine. Catalysis depends on His360, which acts as the Proton acceptor. Tyr363 and Asn374 together coordinate UDP-N-acetyl-alpha-D-glucosamine. Acetyl-CoA is bound by residues Ala377, 383–384, Ser402, Ala420, and Arg437; that span reads NY.

The protein in the N-terminal section; belongs to the N-acetylglucosamine-1-phosphate uridyltransferase family. It in the C-terminal section; belongs to the transferase hexapeptide repeat family. As to quaternary structure, homotrimer. Mg(2+) is required as a cofactor.

The protein localises to the cytoplasm. The catalysed reaction is alpha-D-glucosamine 1-phosphate + acetyl-CoA = N-acetyl-alpha-D-glucosamine 1-phosphate + CoA + H(+). It carries out the reaction N-acetyl-alpha-D-glucosamine 1-phosphate + UTP + H(+) = UDP-N-acetyl-alpha-D-glucosamine + diphosphate. The protein operates within nucleotide-sugar biosynthesis; UDP-N-acetyl-alpha-D-glucosamine biosynthesis; N-acetyl-alpha-D-glucosamine 1-phosphate from alpha-D-glucosamine 6-phosphate (route II): step 2/2. It participates in nucleotide-sugar biosynthesis; UDP-N-acetyl-alpha-D-glucosamine biosynthesis; UDP-N-acetyl-alpha-D-glucosamine from N-acetyl-alpha-D-glucosamine 1-phosphate: step 1/1. Its pathway is bacterial outer membrane biogenesis; LPS lipid A biosynthesis. Catalyzes the last two sequential reactions in the de novo biosynthetic pathway for UDP-N-acetylglucosamine (UDP-GlcNAc). The C-terminal domain catalyzes the transfer of acetyl group from acetyl coenzyme A to glucosamine-1-phosphate (GlcN-1-P) to produce N-acetylglucosamine-1-phosphate (GlcNAc-1-P), which is converted into UDP-GlcNAc by the transfer of uridine 5-monophosphate (from uridine 5-triphosphate), a reaction catalyzed by the N-terminal domain. This chain is Bifunctional protein GlmU, found in Hahella chejuensis (strain KCTC 2396).